The following is a 382-amino-acid chain: Lipid-A-disaccharide synthase (382 aa).

This sequence belongs to the LpxB family.

The catalysed reaction is a lipid X + a UDP-2-N,3-O-bis[(3R)-3-hydroxyacyl]-alpha-D-glucosamine = a lipid A disaccharide + UDP + H(+). It participates in bacterial outer membrane biogenesis; LPS lipid A biosynthesis. Its function is as follows. Condensation of UDP-2,3-diacylglucosamine and 2,3-diacylglucosamine-1-phosphate to form lipid A disaccharide, a precursor of lipid A, a phosphorylated glycolipid that anchors the lipopolysaccharide to the outer membrane of the cell. In Dechloromonas aromatica (strain RCB), this protein is Lipid-A-disaccharide synthase.